The primary structure comprises 225 residues: UPF0758 protein BAV2405 (225 aa).

The MPN domain occupies 103–225 (AMKHPEEVRR…ALSMAERGLI (123 aa)). Residues His174, His176, and Asp187 each contribute to the Zn(2+) site. The short motif at 174–187 (HNHPSGNPQPSAAD) is the JAMM motif element.

This sequence belongs to the UPF0758 family.

The protein is UPF0758 protein BAV2405 of Bordetella avium (strain 197N).